A 424-amino-acid chain; its full sequence is Glycerol-3-phosphate dehydrogenase [NAD(+)] (424 aa).

NAD(+) contacts are provided by residues 79–84 (GSGNWG), Phe111, and Phe167. Lys190 contacts substrate. Ala223 is an NAD(+) binding site. The Proton acceptor role is filled by Lys283. NAD(+)-binding residues include Arg348 and Gln377. Residue 348-349 (RN) coordinates substrate.

The protein belongs to the NAD-dependent glycerol-3-phosphate dehydrogenase family.

It catalyses the reaction sn-glycerol 3-phosphate + NAD(+) = dihydroxyacetone phosphate + NADH + H(+). The sequence is that of Glycerol-3-phosphate dehydrogenase [NAD(+)] (GPD) from Eremothecium gossypii (strain ATCC 10895 / CBS 109.51 / FGSC 9923 / NRRL Y-1056) (Yeast).